The primary structure comprises 123 residues: Putative iron-sulfur cluster insertion protein ErpA (123 aa).

Residues Cys-51, Cys-115, and Cys-117 each contribute to the iron-sulfur cluster site.

Belongs to the HesB/IscA family. As to quaternary structure, homodimer. The cofactor is iron-sulfur cluster.

In terms of biological role, required for insertion of 4Fe-4S clusters. In Burkholderia cenocepacia (strain HI2424), this protein is Putative iron-sulfur cluster insertion protein ErpA.